The chain runs to 592 residues: A-type ATP synthase subunit A (592 aa).

Residue 233 to 240 coordinates ATP; that stretch reads GPFGSGKT.

The protein belongs to the ATPase alpha/beta chains family. Has multiple subunits with at least A(3), B(3), C, D, E, F, H, I and proteolipid K(x).

The protein resides in the cell membrane. It catalyses the reaction ATP + H2O + 4 H(+)(in) = ADP + phosphate + 5 H(+)(out). Its function is as follows. Component of the A-type ATP synthase that produces ATP from ADP in the presence of a proton gradient across the membrane. The A chain is the catalytic subunit. The sequence is that of A-type ATP synthase subunit A from Saccharolobus islandicus (strain L.S.2.15 / Lassen #1) (Sulfolobus islandicus).